The following is a 245-amino-acid chain: Carboxymethylenebutenolidase homolog (245 aa).

A2 carries the N-acetylalanine modification. At K36 the chain carries N6-acetyllysine. Active-site residues include C132, D179, and H212. S223 bears the Phosphoserine mark.

This sequence belongs to the dienelactone hydrolase family.

It is found in the cytoplasm. The protein localises to the cytosol. In terms of biological role, cysteine hydrolase. In Pongo abelii (Sumatran orangutan), this protein is Carboxymethylenebutenolidase homolog (CMBL).